Consider the following 247-residue polypeptide: PF03932 family protein CutC (247 aa).

Belongs to the CutC family.

It is found in the cytoplasm. This Klebsiella pneumoniae subsp. pneumoniae (strain ATCC 700721 / MGH 78578) protein is PF03932 family protein CutC.